Consider the following 238-residue polypeptide: Putative type I specificity subunit S.MpnORF201P (238 aa).

Belongs to the type-I restriction system S methylase family. In terms of assembly, the methyltransferase is composed of M and S polypeptides.

In terms of biological role, the specificity (S) subunit of a type I methyltransferase (MTase); this subunit dictates DNA sequence specificity. The single R subunit has multiple frameshifts and is probably not expressed. In Mycoplasma pneumoniae (strain ATCC 29342 / M129 / Subtype 1) (Mycoplasmoides pneumoniae), this protein is Putative type I specificity subunit S.MpnORF201P.